The primary structure comprises 175 residues: Peptide deformylase (175 aa).

2 residues coordinate Fe cation: Cys96 and His138. Glu139 is an active-site residue. His142 is a Fe cation binding site.

It belongs to the polypeptide deformylase family. The cofactor is Fe(2+).

The catalysed reaction is N-terminal N-formyl-L-methionyl-[peptide] + H2O = N-terminal L-methionyl-[peptide] + formate. Its function is as follows. Removes the formyl group from the N-terminal Met of newly synthesized proteins. Requires at least a dipeptide for an efficient rate of reaction. N-terminal L-methionine is a prerequisite for activity but the enzyme has broad specificity at other positions. The protein is Peptide deformylase of Campylobacter jejuni subsp. jejuni serotype O:2 (strain ATCC 700819 / NCTC 11168).